Reading from the N-terminus, the 148-residue chain is UPF0178 protein Mlg_1612 (148 aa).

The protein belongs to the UPF0178 family.

This chain is UPF0178 protein Mlg_1612, found in Alkalilimnicola ehrlichii (strain ATCC BAA-1101 / DSM 17681 / MLHE-1).